Consider the following 432-residue polypeptide: Protein distal antenna-related (432 aa).

Residues 15–66 (TRGKRPLRNLTPNDKVRAIQRIHNGETKASVSRDLGVPESTLRGWCKNEQKL) form the HTH psq-type domain. The H-T-H motif DNA-binding region spans 42–62 (KASVSRDLGVPESTLRGWCKN). 2 disordered regions span residues 195-221 (ESAD…NSTK) and 401-432 (SCAS…DGEQ). Composition is skewed to polar residues over residues 202-211 (KSPQSTTDIT) and 401-425 (SCAS…TSIA).

As to quaternary structure, interacts with itself, dan, ey and dac to form a complex (or complexes) containing the RD factors.

Its subcellular location is the nucleus. Functionally, probable transcription factor with a role in the retinal determination (RD) network. Regulates ato expression and is required for normal R8 induction and differentiation. Danr appears to repress Dan expression, but Dan is required for Danr expression anterior to the morphogenetic furrow (MF). Dan and Danr lie downstream of so and require dac function for highest levels of expression. Contributes to differentiation of antenna-specific characteristics; effector gene that acts downstream of homothorax (hth), Distal-less (Dll), cut (ct) and spineless (ss) genes to control differentiation of distal antennal structures. The polypeptide is Protein distal antenna-related (Drosophila pseudoobscura pseudoobscura (Fruit fly)).